The chain runs to 579 residues: Putative laccase-9 (579 aa).

The first 27 residues, 1–27, serve as a signal peptide directing secretion; sequence MGTAKLPALLWLLAGVVLALAVNPAHG. Plastocyanin-like domains follow at residues 36 to 152 and 162 to 319; these read FITE…PKRG and KEIP…YTDS. Asn41 and Asn82 each carry an N-linked (GlcNAc...) asparagine glycan. His86 and His88 together coordinate Cu cation. N-linked (GlcNAc...) asparagine glycosylation occurs at Asn114. Residues His131 and His133 each contribute to the Cu cation site. N-linked (GlcNAc...) asparagine glycosylation is found at Asn307, Asn405, and Asn446. The Plastocyanin-like 3 domain maps to 436–563; the sequence is PTAFVDPPVN…DTVFIVKDGK (128 aa). Residues His480, His483, and His485 each contribute to the Cu cation site. Asn496 carries N-linked (GlcNAc...) asparagine glycosylation. Cu cation-binding residues include His542, Cys543, His544, His548, and Met553.

Belongs to the multicopper oxidase family. Requires Cu cation as cofactor.

It localises to the secreted. The protein resides in the extracellular space. The protein localises to the apoplast. It carries out the reaction 4 hydroquinone + O2 = 4 benzosemiquinone + 2 H2O. In terms of biological role, lignin degradation and detoxification of lignin-derived products. This is Putative laccase-9 (LAC9) from Oryza sativa subsp. japonica (Rice).